The chain runs to 198 residues: MKLLILTCLVASAVAMPKFPFRHTELFQTQRGGSSSSSSSEERLKEENIFKFDQQKELQRKQSEKIKEIISESTEQREASSISSSEEVVPKNTEQKHIPQEDALYQQALEQLSRLIKYHQLQMEVVHAQEQFHRINEHNQAQVKEPMRVFNQLDAYPFAAWYYGPEVQYMSFLPFSSIPQPIFPEDAQNTEVMPEWVM.

The signal sequence occupies residues 1–15 (MKLLILTCLVASAVA). Disordered stretches follow at residues 28–47 (QTQR…LKEE) and 71–97 (SEST…EQKH). Phosphoserine is present on residues Ser39, Ser80, Ser81, Ser83, Ser84, and Ser85.

The protein belongs to the alpha-casein family. As to expression, mammary gland specific. Secreted in milk.

The protein localises to the secreted. In terms of biological role, important role in the capacity of milk to transport calcium phosphate. The sequence is that of Alpha-S1-casein (CSN1S1) from Cavia porcellus (Guinea pig).